Consider the following 512-residue polypeptide: uncharacterized protein (512 aa).

The first 22 residues, 1-22 (MVSSLIYSLCAVSGLLATTVNG), serve as a signal peptide directing secretion. An N-linked (GlcNAc...) asparagine glycan is attached at Asn167. Residues 251–282 (SAASPPIYEPDRQTDPEDPETGRNNNQGFEGL) form a disordered region.

The protein localises to the secreted. This is an uncharacterized protein from Arthroderma benhamiae (strain ATCC MYA-4681 / CBS 112371) (Trichophyton mentagrophytes).